We begin with the raw amino-acid sequence, 346 residues long: Protein RecA (346 aa).

67-74 (GPESSGKT) lines the ATP pocket.

It belongs to the RecA family.

It localises to the cytoplasm. Its function is as follows. Can catalyze the hydrolysis of ATP in the presence of single-stranded DNA, the ATP-dependent uptake of single-stranded DNA by duplex DNA, and the ATP-dependent hybridization of homologous single-stranded DNAs. It interacts with LexA causing its activation and leading to its autocatalytic cleavage. This Mycobacterium marinum (strain ATCC BAA-535 / M) protein is Protein RecA.